A 126-amino-acid chain; its full sequence is Small ribosomal subunit protein uS13 (126 aa).

Residues histidine 92–lysine 126 are disordered.

The protein belongs to the universal ribosomal protein uS13 family. Part of the 30S ribosomal subunit. Forms a loose heterodimer with protein S19. Forms two bridges to the 50S subunit in the 70S ribosome.

Functionally, located at the top of the head of the 30S subunit, it contacts several helices of the 16S rRNA. In the 70S ribosome it contacts the 23S rRNA (bridge B1a) and protein L5 of the 50S subunit (bridge B1b), connecting the 2 subunits; these bridges are implicated in subunit movement. Contacts the tRNAs in the A and P-sites. This Deinococcus radiodurans (strain ATCC 13939 / DSM 20539 / JCM 16871 / CCUG 27074 / LMG 4051 / NBRC 15346 / NCIMB 9279 / VKM B-1422 / R1) protein is Small ribosomal subunit protein uS13.